The following is a 149-amino-acid chain: Calmodulin-B (149 aa).

Ala-2 carries the post-translational modification N-acetylalanine. 4 EF-hand domains span residues 8 to 43, 44 to 79, 81 to 116, and 117 to 149; these read EQIA…LGQN, PTEA…KMKE, DSEE…LGEK, and LTDE…MTCK. Ca(2+) is bound by residues Asp-21, Asp-23, Asp-25, Thr-27, Glu-32, Asp-57, Asp-59, Asn-61, Thr-63, Glu-68, Asp-94, Asp-96, Asn-98, and Glu-105. Lys-116 is subject to N6,N6,N6-trimethyllysine. Ca(2+) is bound by residues Asp-130, Asp-132, Asp-134, Gln-136, and Glu-141.

It belongs to the calmodulin family.

Its function is as follows. Calmodulin mediates the control of a large number of enzymes, ion channels and other proteins by Ca(2+). Among the enzymes to be stimulated by the calmodulin-Ca(2+) complex are a number of protein kinases and phosphatases. The protein is Calmodulin-B of Halocynthia roretzi (Sea squirt).